We begin with the raw amino-acid sequence, 196 residues long: Protein/nucleic acid deglycase 3 (196 aa).

The Nucleophile role is filled by Cys-106. A Cysteine sulfinic acid (-SO2H); alternate modification is found at Cys-106.

It belongs to the peptidase C56 family. Homodimer. In terms of processing, cys-106 is easily oxidized to sulfinic acid.

The enzyme catalyses N(omega)-(1-hydroxy-2-oxopropyl)-L-arginyl-[protein] + H2O = lactate + L-arginyl-[protein] + H(+). It carries out the reaction N(6)-(1-hydroxy-2-oxopropyl)-L-lysyl-[protein] + H2O = lactate + L-lysyl-[protein] + H(+). The catalysed reaction is S-(1-hydroxy-2-oxopropyl)-L-cysteinyl-[protein] + H2O = lactate + L-cysteinyl-[protein] + H(+). It catalyses the reaction N(omega)-(1-hydroxy-2-oxoethyl)-L-arginyl-[protein] + H2O = L-arginyl-[protein] + glycolate + H(+). The enzyme catalyses N(6)-(1-hydroxy-2-oxoethyl)-L-lysyl-[protein] + H2O = glycolate + L-lysyl-[protein] + H(+). It carries out the reaction S-(1-hydroxy-2-oxoethyl)-L-cysteinyl-[protein] + H2O = glycolate + L-cysteinyl-[protein] + H(+). The catalysed reaction is N(2)-(1-hydroxy-2-oxopropyl)-dGTP + H2O = lactate + dGTP + H(+). It catalyses the reaction N(2)-(1-hydroxy-2-oxopropyl)-GTP + H2O = lactate + GTP + H(+). The enzyme catalyses N(2)-(1-hydroxy-2-oxopropyl)-GDP + H2O = lactate + GDP + H(+). It carries out the reaction N(2)-(1-hydroxy-2-oxopropyl)-GMP + H2O = lactate + GMP + H(+). The catalysed reaction is N(2)-(1-hydroxy-2-oxoethyl)-dGTP + H2O = dGTP + glycolate + H(+). It catalyses the reaction N(2)-(1-hydroxy-2-oxoethyl)-GTP + H2O = glycolate + GTP + H(+). The enzyme catalyses N(2)-(1-hydroxy-2-oxoethyl)-GDP + H2O = glycolate + GDP + H(+). It carries out the reaction N(2)-(1-hydroxy-2-oxoethyl)-GMP + H2O = glycolate + GMP + H(+). The catalysed reaction is an N(2)-(1-hydroxy-2-oxopropyl)-guanosine in RNA + H2O = a guanosine in RNA + lactate + H(+). It catalyses the reaction an N(2)-(1-hydroxy-2-oxopropyl)-2'-deoxyguanosine in DNA + H2O = a 2'-deoxyguanosine in DNA + lactate + H(+). The enzyme catalyses an N(2)-(1-hydroxy-2-oxoethyl)-guanosine in RNA + H2O = a guanosine in RNA + glycolate + H(+). It carries out the reaction an N(2)-(1-hydroxy-2-oxoethyl)-2'-deoxyguanosine in DNA + H2O = a 2'-deoxyguanosine in DNA + glycolate + H(+). Its activity is regulated as follows. Glyoxalase activity is inhibited by zinc ions. Active as a chaperone in both its reduced and oxidized states, and is more active in its oxidized form. Protein and nucleotide deglycase that catalyzes the deglycation of the Maillard adducts formed between amino groups of proteins or nucleotides and reactive carbonyl groups of glyoxals. Thus, functions as a protein deglycase that repairs methylglyoxal- and glyoxal-glycated proteins, and releases repaired proteins and lactate or glycolate, respectively. Deglycates cysteine, arginine and lysine residues in proteins, and thus reactivates these proteins by reversing glycation by glyoxals. Is able to repair glycated serum albumin, collagen, glyceraldehyde-3-phosphate dehydrogenase, and fructose biphosphate aldolase. Acts on early glycation intermediates (hemithioacetals and aminocarbinols), preventing the formation of Schiff bases and advanced glycation endproducts (AGE) that cause irreversible damage. Also functions as a nucleotide deglycase able to repair glycated guanine in the free nucleotide pool (GTP, GDP, GMP, dGTP) and in DNA and RNA. Is thus involved in a major nucleotide repair system named guanine glycation repair (GG repair), dedicated to reversing methylglyoxal and glyoxal damage via nucleotide sanitization and direct nucleic acid repair. However, is less efficient than Hsp31 and YhbO, suggesting that YajL might be preferentially dedicated to protein repair. Displays a covalent chaperone activity with sulfenylated thiol proteins by forming mixed disulfides with members of the thiol proteome, and preferentially with sulfenylated cellular proteins, upon oxidative stress; these mixed disulfides can be subsequently reduced by low-molecular-weight thiols to regenerate YajL and reduced proteins. Involved in biogenesis of ribosomal proteins, probably as a ribosomal protein-folding chaperone. Confers resistance to oxidative stress. Plays an important role in protection against electrophile/carbonyl stress. The chaperone activity reported for YajL is probably recruited to execute its deglycase activity, to interact with non-native glycated proteins and gain access to partially buried glycated sites. Also displays an apparent glyoxalase activity that in fact reflects its deglycase activity. This Escherichia coli (strain K12) protein is Protein/nucleic acid deglycase 3 (yajL).